The primary structure comprises 362 residues: Biotin synthase (362 aa).

The region spanning 39–267 (NVVQVSTLLS…ETQVRLSAGR (229 aa)) is the Radical SAM core domain. [4Fe-4S] cluster contacts are provided by Cys54, Cys58, and Cys61. Residues Cys98, Cys130, Cys190, and Arg262 each coordinate [2Fe-2S] cluster. The disordered stretch occupies residues 317 to 362 (PFTKVSQPTTVEAKDSRYESLGEKPKWSRPSHTIEKNLELSGKGKN). A compositionally biased stretch (basic and acidic residues) spans 328-354 (EAKDSRYESLGEKPKWSRPSHTIEKNL).

It belongs to the radical SAM superfamily. Biotin synthase family. In terms of assembly, homodimer. Requires [4Fe-4S] cluster as cofactor. The cofactor is [2Fe-2S] cluster.

The enzyme catalyses (4R,5S)-dethiobiotin + (sulfur carrier)-SH + 2 reduced [2Fe-2S]-[ferredoxin] + 2 S-adenosyl-L-methionine = (sulfur carrier)-H + biotin + 2 5'-deoxyadenosine + 2 L-methionine + 2 oxidized [2Fe-2S]-[ferredoxin]. Its pathway is cofactor biosynthesis; biotin biosynthesis; biotin from 7,8-diaminononanoate: step 2/2. Catalyzes the conversion of dethiobiotin (DTB) to biotin by the insertion of a sulfur atom into dethiobiotin via a radical-based mechanism. The sequence is that of Biotin synthase from Flavobacterium psychrophilum (strain ATCC 49511 / DSM 21280 / CIP 103535 / JIP02/86).